We begin with the raw amino-acid sequence, 37 residues long: MTAESMLFNGAILSIVLVLVGLAWGFLLLKIQGGEAE.

A helical membrane pass occupies residues Ala11–Leu29.

Belongs to the PetM family. The 4 large subunits of the cytochrome b6-f complex are cytochrome b6, subunit IV (17 kDa polypeptide, PetD), cytochrome f and the Rieske protein, while the 4 small subunits are PetG, PetL, PetM and PetN. The complex functions as a dimer.

It is found in the cellular thylakoid membrane. Component of the cytochrome b6-f complex, which mediates electron transfer between photosystem II (PSII) and photosystem I (PSI), cyclic electron flow around PSI, and state transitions. This Gloeothece citriformis (strain PCC 7424) (Cyanothece sp. (strain PCC 7424)) protein is Cytochrome b6-f complex subunit 7.